Consider the following 222-residue polypeptide: Deoxyribose-phosphate aldolase (222 aa).

The Proton donor/acceptor role is filled by Asp90. The active-site Schiff-base intermediate with acetaldehyde is the Lys152. Residue Lys181 is the Proton donor/acceptor of the active site.

The protein belongs to the DeoC/FbaB aldolase family. DeoC type 1 subfamily.

The protein localises to the cytoplasm. The enzyme catalyses 2-deoxy-D-ribose 5-phosphate = D-glyceraldehyde 3-phosphate + acetaldehyde. The protein operates within carbohydrate degradation; 2-deoxy-D-ribose 1-phosphate degradation; D-glyceraldehyde 3-phosphate and acetaldehyde from 2-deoxy-alpha-D-ribose 1-phosphate: step 2/2. Functionally, catalyzes a reversible aldol reaction between acetaldehyde and D-glyceraldehyde 3-phosphate to generate 2-deoxy-D-ribose 5-phosphate. The protein is Deoxyribose-phosphate aldolase of Pectobacterium atrosepticum (strain SCRI 1043 / ATCC BAA-672) (Erwinia carotovora subsp. atroseptica).